The following is an 86-amino-acid chain: MALLEFFRPKKTTTASVAKERLQIIVAERRSAGQSTPSYLPQLKLDLLEVIRKYVNINPDQVSVNLDQKDEDLSVLELNVTLPEDK.

The protein belongs to the MinE family.

Prevents the cell division inhibition by proteins MinC and MinD at internal division sites while permitting inhibition at polar sites. This ensures cell division at the proper site by restricting the formation of a division septum at the midpoint of the long axis of the cell. The protein is Cell division topological specificity factor of Photobacterium profundum (strain SS9).